We begin with the raw amino-acid sequence, 257 residues long: MLLGVNIDHIAVLRQARMVNDPDLLEAAFIVARHGDQITLHVREDRRHAQDFDLENIIKFCKSPVNLECALNDEILNLALKLKPHRVTLVPEKREELTTEGGLCLNHAKLKQSIEKLHNANIEVSLFINPSLEDIEKSKILKAQFIELHTGHYANLHNALFSNISHTAFALKELNQDKKTLQAQFEKELQNLELCAKKGLELGLKVAAGHGLNYKNVKPVVKIKEICELNIGQSIVARSVFTGLQNAILEMKELIKR.

Asn-6 contributes to the 3-amino-2-oxopropyl phosphate binding site. Position 8 to 9 (8 to 9 (DH)) interacts with 1-deoxy-D-xylulose 5-phosphate. Arg-17 serves as a coordination point for 3-amino-2-oxopropyl phosphate. The active-site Proton acceptor is His-41. 1-deoxy-D-xylulose 5-phosphate contacts are provided by Arg-43 and His-48. The Proton acceptor role is filled by Glu-68. A 1-deoxy-D-xylulose 5-phosphate-binding site is contributed by Thr-98. The active-site Proton donor is the His-210. 3-amino-2-oxopropyl phosphate contacts are provided by residues Gly-211 and 232 to 233 (GQ).

The protein belongs to the PNP synthase family. As to quaternary structure, homooctamer; tetramer of dimers.

It localises to the cytoplasm. It carries out the reaction 3-amino-2-oxopropyl phosphate + 1-deoxy-D-xylulose 5-phosphate = pyridoxine 5'-phosphate + phosphate + 2 H2O + H(+). The protein operates within cofactor biosynthesis; pyridoxine 5'-phosphate biosynthesis; pyridoxine 5'-phosphate from D-erythrose 4-phosphate: step 5/5. Its function is as follows. Catalyzes the complicated ring closure reaction between the two acyclic compounds 1-deoxy-D-xylulose-5-phosphate (DXP) and 3-amino-2-oxopropyl phosphate (1-amino-acetone-3-phosphate or AAP) to form pyridoxine 5'-phosphate (PNP) and inorganic phosphate. This chain is Pyridoxine 5'-phosphate synthase, found in Campylobacter jejuni (strain RM1221).